Reading from the N-terminus, the 259-residue chain is Phosphatidylglycerol--prolipoprotein diacylglyceryl transferase (259 aa).

A run of 4 helical transmembrane segments spans residues 12 to 32 (LSLHWYAVCILVGLLLAVYLA), 46 to 66 (IIDFILIAFPLAIIGARIYYV), 83 to 103 (IWNGGIAIYGGLITGTIVLFV), and 109 to 129 (VLNPIHFLDIAAPSVMLAQAI). Residue Arg-131 participates in a 1,2-diacyl-sn-glycero-3-phospho-(1'-sn-glycerol) binding. The next 3 membrane-spanning stretches (helical) occupy residues 167–187 (VPTFLYESMWNLIGFVIIMVW), 194–214 (LLDGDILSFYLIWYGCGRLVI), and 226–246 (GIRVSQYVSVLLIVIAIVFIF).

This sequence belongs to the Lgt family.

The protein resides in the cell membrane. The enzyme catalyses L-cysteinyl-[prolipoprotein] + a 1,2-diacyl-sn-glycero-3-phospho-(1'-sn-glycerol) = an S-1,2-diacyl-sn-glyceryl-L-cysteinyl-[prolipoprotein] + sn-glycerol 1-phosphate + H(+). It participates in protein modification; lipoprotein biosynthesis (diacylglyceryl transfer). Catalyzes the transfer of the diacylglyceryl group from phosphatidylglycerol to the sulfhydryl group of the N-terminal cysteine of a prolipoprotein, the first step in the formation of mature lipoproteins. The sequence is that of Phosphatidylglycerol--prolipoprotein diacylglyceryl transferase from Streptococcus equi subsp. zooepidemicus (strain MGCS10565).